The primary structure comprises 502 residues: Glycerol kinase (502 aa).

ADP is bound at residue Thr-14. ATP is bound by residues Thr-14, Thr-15, and Ser-16. Thr-14 contributes to the sn-glycerol 3-phosphate binding site. Arg-18 serves as a coordination point for ADP. Residues Arg-84, Glu-85, Tyr-136, and Asp-246 each coordinate sn-glycerol 3-phosphate. Glycerol is bound by residues Arg-84, Glu-85, Tyr-136, Asp-246, and Gln-247. Positions 268 and 311 each coordinate ADP. Positions 268, 311, 315, and 412 each coordinate ATP. ADP-binding residues include Gly-412 and Asn-416.

The protein belongs to the FGGY kinase family. In terms of assembly, homotetramer and homodimer (in equilibrium). Heterodimer with EIIA-Glc. Binds 1 zinc ion per glycerol kinase EIIA-Glc dimer. The zinc ion is important for dimerization.

It carries out the reaction glycerol + ATP = sn-glycerol 3-phosphate + ADP + H(+). Its pathway is polyol metabolism; glycerol degradation via glycerol kinase pathway; sn-glycerol 3-phosphate from glycerol: step 1/1. With respect to regulation, activity of this regulatory enzyme is affected by several metabolites. Allosterically and non-competitively inhibited by fructose 1,6-bisphosphate (FBP) and unphosphorylated phosphocarrier protein EIIA-Glc (III-Glc), an integral component of the bacterial phosphotransferase (PTS) system. Functionally, key enzyme in the regulation of glycerol uptake and metabolism. Catalyzes the phosphorylation of glycerol to yield sn-glycerol 3-phosphate. This is Glycerol kinase from Salmonella heidelberg (strain SL476).